The chain runs to 222 residues: Adenylate kinase (222 aa).

Residue Ser2 is a propeptide, removed in mature form. N-acetylserine occurs at positions 2 and 3. Gly16–Thr21 provides a ligand contact to ATP. The tract at residues Ala36–Val65 is NMP. AMP is bound by residues Thr37, Arg42, Gly63–Val65, Gly92–Arg95, and Gln99. Positions Gly133–Asp170 are LID. ATP contacts are provided by residues Arg134 and Ser143–Tyr144. Arg167 and Arg178 together coordinate AMP. Position 206 (Gln206) interacts with ATP.

This sequence belongs to the adenylate kinase family. AK2 subfamily. Monomer.

It localises to the cytoplasm. The protein localises to the cytosol. The protein resides in the mitochondrion intermembrane space. It catalyses the reaction AMP + ATP = 2 ADP. Its function is as follows. Catalyzes the reversible transfer of the terminal phosphate group between ATP and AMP. Plays an important role in cellular energy homeostasis and in adenine nucleotide metabolism. Adenylate kinase activity is critical for regulation of the phosphate utilization and the AMP de novo biosynthesis pathways. This is Adenylate kinase from Saccharomyces cerevisiae (strain YJM789) (Baker's yeast).